Reading from the N-terminus, the 435-residue chain is Aspartate aminotransferase (435 aa).

Pyridoxal 5'-phosphate contacts are provided by residues tyrosine 69 and 100-101 (SL). 139–141 (YDR) is a substrate binding site. Residues asparagine 189, tyrosine 221, and 254–256 (STS) contribute to the pyridoxal 5'-phosphate site. Arginine 392 provides a ligand contact to substrate.

Belongs to the class-I pyridoxal-phosphate-dependent aminotransferase family. The cofactor is pyridoxal 5'-phosphate.

The enzyme catalyses L-aspartate + 2-oxoglutarate = oxaloacetate + L-glutamate. In terms of biological role, main aspartate aminotransferase that couples nitrogen assimilation to aspartate synthesis. Has a weak, but significant, side activity toward kynurenine (Kyn). Oxaloacetate and 2-oxoglutarate, but not pyruvate, serve as amino acceptors, while Asp, Glu and Kyn serve as the best amino donors. Essential for axenic growth and survival of M.tuberculosis in macrophages and in mice. This is Aspartate aminotransferase from Mycobacterium tuberculosis (strain ATCC 25618 / H37Rv).